A 1266-amino-acid polypeptide reads, in one-letter code: SUMO-interacting motif-containing protein 1 (1266 aa).

The segment at Met1–Pro35 is disordered. Positions Gly22–Leu31 are enriched in basic residues. An SUMO interaction motif 1 (SIM); mediates the binding to polysumoylated substrates motif is present at residues Phe45–Thr49. Residues Val64–Thr68 carry the SUMO interaction motif 2 (SIM); mediates the binding to polysumoylated substrates motif. Low complexity-rich tracts occupy residues Ser183–Asn197 and Ser532–Ser553. Disordered stretches follow at residues Ser183–Gln206, Ser532–Val732, Asn756–Ala812, and Leu1024–Asn1052. The span at Ser560 to Val571 shows a compositional bias: polar residues. A compositionally biased stretch (low complexity) spans Ser764 to Ser777. Positions Gln779 to Arg1266 are interaction with SLF2. The required for inhibition of CAPN3 protease activity stretch occupies residues Ser857–Arg1266. The tract at residues Ile865 to Arg1200 is NSE5-like domain.

In terms of assembly, forms a heterodimer with SLF2. Interacts (via SIM domains) with SUMO1 and SUMO2. Interacts with CAPN3 and CTBP1. Interacts with SMC6 and ZNF451.

It localises to the nucleus. The protein resides in the PML body. Its function is as follows. Inhibits the protease activity of CAPN3. May play a role in SMC5-SMC6 complex recruitment for viral restriction. Forms a complex with SLF2 and this complex is required to recruit SMC5-SMC6 complex to PML nuclear bodies and sites of viral replication. In Rattus norvegicus (Rat), this protein is SUMO-interacting motif-containing protein 1 (Simc1).